A 94-amino-acid polypeptide reads, in one-letter code: Co-chaperonin GroES (94 aa).

It belongs to the GroES chaperonin family. Heptamer of 7 subunits arranged in a ring. Interacts with the chaperonin GroEL.

Its subcellular location is the cytoplasm. Its function is as follows. Together with the chaperonin GroEL, plays an essential role in assisting protein folding. The GroEL-GroES system forms a nano-cage that allows encapsulation of the non-native substrate proteins and provides a physical environment optimized to promote and accelerate protein folding. GroES binds to the apical surface of the GroEL ring, thereby capping the opening of the GroEL channel. This Ehrlichia chaffeensis (strain ATCC CRL-10679 / Arkansas) protein is Co-chaperonin GroES.